Here is a 63-residue protein sequence, read N- to C-terminus: Non-structural protein 3b (63 aa).

This chain is Non-structural protein 3b, found in Avian infectious bronchitis virus (strain UK/68/84) (IBV).